The chain runs to 459 residues: Nucleobindin-1 (459 aa).

Residues 1–25 (MPTSVPRGAPFLLLPPLLMLSAVLA) form the signal peptide. Ser-85 carries the post-translational modification Phosphoserine. At Thr-147 the chain carries Phosphothreonine. Positions 149–217 (EARDLELLIQ…QQRRHREHPK (69 aa)) form a coiled coil. Residues 171–217 (HHEEFKRYEMLKEHERRRYLESLGEEQRKEAERKLQEQQRRHREHPK) mediate DNA binding. The segment covering 192–209 (SLGEEQRKEAERKLQEQQ) has biased composition (basic and acidic residues). Residues 192-220 (SLGEEQRKEAERKLQEQQRRHREHPKVNV) are disordered. The segment at 227–320 (LKEVWEELDG…VTLEEFLAST (94 aa)) is binds to GNAI2 and GNAI3. EF-hand domains follow at residues 239-274 (PNRF…ELEK) and 291-326 (ERLR…KEFG). Positions 252, 254, 256, 263, 304, 306, 308, and 315 each coordinate Ca(2+). A GBA motif is present at residues 302–332 (NVDTNQDRLVTLEEFLASTQRKEFGETAEGW). The stretch at 340-407 (AYTEEELKRF…RKQQQQEQSA (68 aa)) forms a coiled coil. Ser-368 bears the Phosphoserine mark. A disordered region spans residues 393-459 (LQMEQRKQQQ…VLPQLDSQHL (67 aa)). Basic and acidic residues predominate over residues 433–445 (DQKDVPASEKKVP). At Ser-456 the chain carries Phosphoserine.

It belongs to the nucleobindin family. As to quaternary structure, interacts (via GBA motif) with guanine nucleotide-binding protein G(i) alpha subunits GNAI1, GNAI2 and GNAI3 with higher affinity for GNAI1 and GNAI3 than for GNAI2. Preferentially interacts with inactive rather than active GNAI3. Interaction with GNAI3 is inhibited when NUCB1 binds calcium, probably due to a conformational change which renders the GBA motif inaccessible. Minor constituent of the mineralized matrix of bone. Detected in calvaria, rib cartilage, liver, kidney, spleen, brain, lung, skeletal and heart muscle with highest expression in calvaria and approximately half the amount in kidney, liver and brain.

It localises to the golgi apparatus. The protein resides in the cis-Golgi network membrane. Its subcellular location is the cytoplasm. It is found in the secreted. Functionally, major calcium-binding protein of the Golgi which may have a role in calcium homeostasis. Acts as a non-receptor guanine nucleotide exchange factor which binds to and activates alpha subunits of guanine nucleotide-binding proteins (G proteins). The sequence is that of Nucleobindin-1 (Nucb1) from Rattus norvegicus (Rat).